A 339-amino-acid chain; its full sequence is UPF0324 membrane protein SpyM3_0740 (339 aa).

The next 9 helical transmembrane spans lie at 7–24, 28–50, 57–79, 84–106, 118–140, 150–172, 256–275, 290–307, and 314–336; these read KLPG…AWYL, FPII…FYHH, GISF…GLNL, AVGM…VAYG, ATLV…APVI, AISV…GQLL, FILF…SLGV, FIVM…LVKL, and AILL…QLSL.

Belongs to the UPF0324 family.

It localises to the cell membrane. This is UPF0324 membrane protein SpyM3_0740 from Streptococcus pyogenes serotype M3 (strain ATCC BAA-595 / MGAS315).